The primary structure comprises 293 residues: Transcriptional regulator ICP22 homolog (293 aa).

Disordered stretches follow at residues 1 to 49 (MPHG…QRID) and 175 to 293 (RFLE…SARR). The segment covering 21–31 (TPSTSPLIPSL) has biased composition (low complexity). Residues 190–210 (EECDVSGDESPSEEEEEDEAS) are compositionally biased toward acidic residues. Residues 272–281 (AAKKRRKRQP) are compositionally biased toward basic residues. A compositionally biased stretch (basic and acidic residues) spans 282 to 293 (PKGERPTKSARR).

Belongs to the herpesviridae ICP22 family.

This Equus caballus (Horse) protein is Transcriptional regulator ICP22 homolog (IR4).